A 285-amino-acid chain; its full sequence is Urease accessory protein UreD (285 aa).

This sequence belongs to the UreD family. As to quaternary structure, ureD, UreF and UreG form a complex that acts as a GTP-hydrolysis-dependent molecular chaperone, activating the urease apoprotein by helping to assemble the nickel containing metallocenter of UreC. The UreE protein probably delivers the nickel.

The protein localises to the cytoplasm. Required for maturation of urease via the functional incorporation of the urease nickel metallocenter. In Methylobacillus flagellatus (strain ATCC 51484 / DSM 6875 / VKM B-1610 / KT), this protein is Urease accessory protein UreD.